Consider the following 95-residue polypeptide: Aspartyl/glutamyl-tRNA(Asn/Gln) amidotransferase subunit C (95 aa).

This sequence belongs to the GatC family. As to quaternary structure, heterotrimer of A, B and C subunits.

It catalyses the reaction L-glutamyl-tRNA(Gln) + L-glutamine + ATP + H2O = L-glutaminyl-tRNA(Gln) + L-glutamate + ADP + phosphate + H(+). It carries out the reaction L-aspartyl-tRNA(Asn) + L-glutamine + ATP + H2O = L-asparaginyl-tRNA(Asn) + L-glutamate + ADP + phosphate + 2 H(+). Its function is as follows. Allows the formation of correctly charged Asn-tRNA(Asn) or Gln-tRNA(Gln) through the transamidation of misacylated Asp-tRNA(Asn) or Glu-tRNA(Gln) in organisms which lack either or both of asparaginyl-tRNA or glutaminyl-tRNA synthetases. The reaction takes place in the presence of glutamine and ATP through an activated phospho-Asp-tRNA(Asn) or phospho-Glu-tRNA(Gln). This Pelagibacter ubique (strain HTCC1062) protein is Aspartyl/glutamyl-tRNA(Asn/Gln) amidotransferase subunit C.